The sequence spans 124 residues: Small ribosomal subunit protein uS12c (124 aa).

It belongs to the universal ribosomal protein uS12 family. As to quaternary structure, part of the 30S ribosomal subunit.

It is found in the plastid. It localises to the chloroplast. With S4 and S5 plays an important role in translational accuracy. Located at the interface of the 30S and 50S subunits. The polypeptide is Small ribosomal subunit protein uS12c (rps12) (Ostreococcus tauri).